The chain runs to 644 residues: Arginine--tRNA ligase (644 aa).

Residues 129–139 (ANPIHPLHLGH) carry the 'HIGH' region motif.

The protein belongs to the class-I aminoacyl-tRNA synthetase family.

It localises to the cytoplasm. The enzyme catalyses tRNA(Arg) + L-arginine + ATP = L-arginyl-tRNA(Arg) + AMP + diphosphate. The polypeptide is Arginine--tRNA ligase (argS) (Aeropyrum pernix (strain ATCC 700893 / DSM 11879 / JCM 9820 / NBRC 100138 / K1)).